A 545-amino-acid chain; its full sequence is G-protein coupled receptor 161 (545 aa).

Over 1 to 46 the chain is Extracellular; sequence MDFVQHALLTASRGALTMSLNSSLSYRKELSNLTATEGGEGGAVSE. Residues asparagine 21 and asparagine 32 are each glycosylated (N-linked (GlcNAc...) asparagine). Residues 47-67 traverse the membrane as a helical segment; it reads FIAIIIITVLVCLGNLVIVVT. Residues 68–80 lie on the Cytoplasmic side of the membrane; that stretch reads LYKKSYLLTLSNK. The helical transmembrane segment at 81–101 threads the bilayer; it reads FVFSLTLSNFLLSVLVLPFVV. Topologically, residues 102-117 are extracellular; that stretch reads TSSIRREWIFGVVWCN. Cysteine 116 and cysteine 194 are disulfide-bonded. The N-linked (GlcNAc...) asparagine glycan is linked to asparagine 117. The chain crosses the membrane as a helical span at residues 118 to 139; the sequence is FSALLYLLISSASMLTLGVIAI. Residues 140–159 are Cytoplasmic-facing; that stretch reads DRYYAVLYPMVYPMKITGNR. Residues 160-180 traverse the membrane as a helical segment; it reads AVMALVYIWLHSLIGCLPPLF. Topologically, residues 181 to 205 are extracellular; sequence GWSSVEFDEFKWMCVAAWHQEPGYT. A helical transmembrane segment spans residues 206–226; it reads IFWQIWCALFPFLIMLVCYGF. At 227 to 285 the chain is on the cytoplasmic side; the sequence is IFRVARVKARKVHCGTVVTVEEDSQRSGRKNSSTSTSSSGSRRNALQGVVYSANQCKAL. A helical membrane pass occupies residues 286-306; it reads ITILVVIGAFMVTWGPYMVVI. Residues 307–322 are Extracellular-facing; sequence TSEALWGKNCVSPTLE. A helical transmembrane segment spans residues 323–343; that stretch reads TWATWLSFTSAICHPLIYGLW. The Cytoplasmic portion of the chain corresponds to 344–545; it reads NKTVRKELLG…EGNVLAAEQR (202 aa).

The protein belongs to the G-protein coupled receptor 1 family.

The protein resides in the cell projection. The protein localises to the cilium membrane. It localises to the cell membrane. Its function is as follows. Key negative regulator of Shh signaling, which promotes the processing of GLI3 into GLI3R during neural tube development. Recruited by TULP3 and the IFT-A complex to primary cilia and acts as a regulator of the PKA-dependent basal repression machinery in Shh signaling by increasing cAMP levels, leading to promote the PKA-dependent processing of GLI3 into GLI3R and repress the Shh signaling. In presence of SHH, it is removed from primary cilia and is internalized into recycling endosomes, preventing its activity and allowing activation of the Shh signaling. Its ligand is unknown. The polypeptide is G-protein coupled receptor 161 (Gpr161) (Mus musculus (Mouse)).